The following is a 351-amino-acid chain: Nitronate monooxygenase (351 aa).

FMN is bound by residues Leu21, Asn69, Gln176, Gly181, Gly218, and 237 to 240 (QMGT).

Belongs to the nitronate monooxygenase family. NMO class I subfamily. FMN serves as cofactor.

It catalyses the reaction 3 propionate 3-nitronate + 3 O2 + H2O = 3 3-oxopropanoate + 2 nitrate + nitrite + H2O2 + 3 H(+). Its function is as follows. Nitronate monooxygenase that uses molecular oxygen to catalyze the oxidative denitrification of alkyl nitronates. The toxin propionate 3-nitronate (P3N) is the best substrate (and the presumed physiological substrate), but this enzyme is also active on other primary and secondary nitronates such as propyl-1-nitronate, ethylnitronate, pentyl-1-nitronate, butyl-1-nitronate and propyl-2-nitronate. Is likely involved in the degradation of P3N, that allows P.aeruginosa PAO1 to grow on 3-nitropropionate/P3N as the sole nitrogen source. Also functions in the detoxification of P3N, a metabolic poison produced by plants and fungi as a defense mechanism. Cannot oxidize nitroalkanes such as 3-nitropropionate, nitroethane, 1-nitropropane, 1-nitrobutane, 1-nitropentane, or 2-nitropropane. The polypeptide is Nitronate monooxygenase (Pseudomonas aeruginosa (strain ATCC 15692 / DSM 22644 / CIP 104116 / JCM 14847 / LMG 12228 / 1C / PRS 101 / PAO1)).